A 138-amino-acid chain; its full sequence is Large ribosomal subunit protein bL19 (138 aa).

The protein belongs to the bacterial ribosomal protein bL19 family.

Functionally, this protein is located at the 30S-50S ribosomal subunit interface and may play a role in the structure and function of the aminoacyl-tRNA binding site. This Rickettsia peacockii (strain Rustic) protein is Large ribosomal subunit protein bL19.